A 229-amino-acid chain; its full sequence is Ribonuclease 3 (229 aa).

In terms of domain architecture, RNase III spans 7 to 132; that stretch reads LRAFESRIGH…VIAAVYLDAG (126 aa). A Mg(2+)-binding site is contributed by glutamate 45. Residue aspartate 49 is part of the active site. The Mg(2+) site is built by aspartate 118 and glutamate 121. Residue glutamate 121 is part of the active site. Residues 157-226 enclose the DRBM domain; it reads DAKTALQEWA…ARALLARMEA (70 aa).

Belongs to the ribonuclease III family. Homodimer. Mg(2+) serves as cofactor.

The protein localises to the cytoplasm. It carries out the reaction Endonucleolytic cleavage to 5'-phosphomonoester.. Functionally, digests double-stranded RNA. Involved in the processing of primary rRNA transcript to yield the immediate precursors to the large and small rRNAs (23S and 16S). Processes some mRNAs, and tRNAs when they are encoded in the rRNA operon. Processes pre-crRNA and tracrRNA of type II CRISPR loci if present in the organism. The polypeptide is Ribonuclease 3 (Cereibacter sphaeroides (strain ATCC 17025 / ATH 2.4.3) (Rhodobacter sphaeroides)).